We begin with the raw amino-acid sequence, 236 residues long: Aminopyrimidine aminohydrolase (236 aa).

D44 lines the substrate pocket. C135 acts as the Nucleophile in catalysis. The substrate site is built by Y139 and Y163. E205 (proton donor) is an active-site residue.

Belongs to the TenA family. In terms of assembly, homotetramer.

The catalysed reaction is 4-amino-5-aminomethyl-2-methylpyrimidine + H2O = 4-amino-5-hydroxymethyl-2-methylpyrimidine + NH4(+). It carries out the reaction thiamine + H2O = 5-(2-hydroxyethyl)-4-methylthiazole + 4-amino-5-hydroxymethyl-2-methylpyrimidine + H(+). Its pathway is cofactor biosynthesis; thiamine diphosphate biosynthesis. Catalyzes an amino-pyrimidine hydrolysis reaction at the C5' of the pyrimidine moiety of thiamine compounds, a reaction that is part of a thiamine salvage pathway. Thus, catalyzes the conversion of 4-amino-5-aminomethyl-2-methylpyrimidine to 4-amino-5-hydroxymethyl-2-methylpyrimidine (HMP). To a lesser extent, is also able to catalyze the hydrolytic cleavage of thiamine; however, this thiaminase activity is unlikely to be physiologically relevant. Therefore, is involved in the regeneration of the thiamine pyrimidine from thiamine degraded products present in the environment, rather than in thiamine degradation. This Bacillus subtilis (strain 168) protein is Aminopyrimidine aminohydrolase.